Here is a 306-residue protein sequence, read N- to C-terminus: Ribosomal protein L11 methyltransferase (306 aa).

The S-adenosyl-L-methionine site is built by T154, G179, D201, and N242.

Belongs to the methyltransferase superfamily. PrmA family.

The protein localises to the cytoplasm. It catalyses the reaction L-lysyl-[protein] + 3 S-adenosyl-L-methionine = N(6),N(6),N(6)-trimethyl-L-lysyl-[protein] + 3 S-adenosyl-L-homocysteine + 3 H(+). Its function is as follows. Methylates ribosomal protein L11. This is Ribosomal protein L11 methyltransferase from Stenotrophomonas maltophilia (strain K279a).